Consider the following 278-residue polypeptide: Outer spore wall protein 1 (278 aa).

It localises to the spore wall. Its function is as follows. May be involved in a late step of spore wall assembly. This is Outer spore wall protein 1 (OSW1) from Saccharomyces cerevisiae (strain ATCC 204508 / S288c) (Baker's yeast).